Here is a 97-residue protein sequence, read N- to C-terminus: Kunitz-type trypsin inhibitor 1 (97 aa).

It belongs to the protease inhibitor I3 (leguminous Kunitz-type inhibitor) family.

Functionally, exhibits Kunitz trypsin protease inhibitor activity. The sequence is that of Kunitz-type trypsin inhibitor 1 from Selenicereus costaricensis (Red-fleshed dragon fruit).